The sequence spans 166 residues: Ureidoglycolate lyase (166 aa).

This sequence belongs to the ureidoglycolate lyase family. Homodimer. It depends on Ni(2+) as a cofactor.

The enzyme catalyses (S)-ureidoglycolate = urea + glyoxylate. It functions in the pathway nitrogen metabolism; (S)-allantoin degradation. In terms of biological role, catalyzes the catabolism of the allantoin degradation intermediate (S)-ureidoglycolate, generating urea and glyoxylate. Involved in the utilization of allantoin as nitrogen source. In Rhizobium leguminosarum bv. trifolii (strain WSM2304), this protein is Ureidoglycolate lyase.